Here is a 371-residue protein sequence, read N- to C-terminus: Capsular polysaccharide phosphotransferase cps12A (371 aa).

It belongs to the stealth family.

In terms of biological role, part of a capsular polysaccharide synthesis locus. The chain is Capsular polysaccharide phosphotransferase cps12A (cps12A) from Actinobacillus pleuropneumoniae (Haemophilus pleuropneumoniae).